Reading from the N-terminus, the 307-residue chain is uncharacterized protein (307 aa).

Composition is skewed to basic and acidic residues over residues 42–52 and 112–121; these read TCRSPGEDKCP and QKKEEPEGSH. A disordered region spans residues 42 to 153; sequence TCRSPGEDKC…VPPAVASASA (112 aa). The span at 129–139 shows a compositional bias: basic residues; sequence KQHKKAKKRKS.

This is an uncharacterized protein from Mus musculus (Mouse).